A 1073-amino-acid chain; its full sequence is ATP-dependent helicase/deoxyribonuclease subunit B (1073 aa).

This sequence belongs to the helicase family. AddB/RexB type 2 subfamily. In terms of assembly, heterodimer of AddA and RexB. The cofactor is Mg(2+).

In terms of biological role, the heterodimer acts as both an ATP-dependent DNA helicase and an ATP-dependent, dual-direction single-stranded exonuclease. Recognizes the chi site generating a DNA molecule suitable for the initiation of homologous recombination. This subunit has 5' -&gt; 3' nuclease activity but not helicase activity. This Streptococcus equi subsp. zooepidemicus (strain MGCS10565) protein is ATP-dependent helicase/deoxyribonuclease subunit B.